A 443-amino-acid polypeptide reads, in one-letter code: Chromosomal replication initiator protein DnaA (443 aa).

The segment at 1-73 (MYGDYRQIWE…YDAASKVTNR (73 aa)) is domain I, interacts with DnaA modulators. Positions 73-106 (RFIEIKILSEDEEEYREIKESIERENSSESTLLS) are domain II. Residues 107-323 (TLNPKYTFDT…GALIRIVAFA (217 aa)) form a domain III, AAA+ region region. ATP contacts are provided by Gly151, Gly153, Lys154, and Thr155. A domain IV, binds dsDNA region spans residues 324 to 443 (TLTKSNIDLE…EELKKRIKGY (120 aa)).

Belongs to the DnaA family. In terms of assembly, oligomerizes as a right-handed, spiral filament on DNA at oriC.

Its subcellular location is the cytoplasm. Its function is as follows. Plays an essential role in the initiation and regulation of chromosomal replication. ATP-DnaA binds to the origin of replication (oriC) to initiate formation of the DNA replication initiation complex once per cell cycle. Binds the DnaA box (a 9 base pair repeat at the origin) and separates the double-stranded (ds)DNA. Forms a right-handed helical filament on oriC DNA; dsDNA binds to the exterior of the filament while single-stranded (ss)DNA is stabiized in the filament's interior. The ATP-DnaA-oriC complex binds and stabilizes one strand of the AT-rich DNA unwinding element (DUE), permitting loading of DNA polymerase. After initiation quickly degrades to an ADP-DnaA complex that is not apt for DNA replication. Binds acidic phospholipids. This chain is Chromosomal replication initiator protein DnaA, found in Caldanaerobacter subterraneus subsp. tengcongensis (strain DSM 15242 / JCM 11007 / NBRC 100824 / MB4) (Thermoanaerobacter tengcongensis).